Reading from the N-terminus, the 61-residue chain is Metallothionein-II, hippocampal (61 aa).

At M1 the chain carries N-acetylmethionine. The beta stretch occupies residues M1–C29. Residues C5, C7, C13, C15, C19, C21, C24, C26, C29, C33, C34, C36, C37, C41, C44, C48, C50, C57, C59, and C60 each contribute to the a divalent metal cation site. The tract at residues K30–A61 is alpha.

The protein belongs to the metallothionein superfamily. Type 1 family.

Metallothioneins have a high content of cysteine residues that bind various heavy metals; these proteins are transcriptionally regulated by both heavy metals and glucocorticoids. This isoform may play a role in regulating the transport, accumulation, and compartmentation of zinc in the hippocampus. This is Metallothionein-II, hippocampal from Bos taurus (Bovine).